The sequence spans 254 residues: NAD-dependent protein deacetylase 1 (254 aa).

Residues 3–252 enclose the Deacetylase sirtuin-type domain; it reads VDFTTDELDE…PKLLDRLRGM (250 aa). NAD(+) contacts are provided by Ala-29, Thr-33, Phe-40, Arg-41, Gln-105, Val-107, Asp-108, and His-123. Phe-40 lines the nicotinamide pocket. Residues Val-107 and Asp-108 each contribute to the nicotinamide site. The active-site Proton acceptor is the His-123. The Zn(2+) site is built by Cys-131, Cys-134, Cys-154, and Cys-157. NAD(+) is bound by residues Thr-195, Ser-196, and Asn-220.

The protein belongs to the sirtuin family. Class U subfamily. The cofactor is Zn(2+).

Its subcellular location is the cytoplasm. The catalysed reaction is N(6)-acetyl-L-lysyl-[protein] + NAD(+) + H2O = 2''-O-acetyl-ADP-D-ribose + nicotinamide + L-lysyl-[protein]. Functionally, NAD-dependent protein deacetylase which modulates the activities of several enzymes which are inactive in their acetylated form. Deacetylates the N-terminal lysine residue of Alba, the major archaeal chromatin protein and that, in turn, increases Alba's DNA binding affinity, thereby repressing transcription. This chain is NAD-dependent protein deacetylase 1, found in Pyrobaculum aerophilum (strain ATCC 51768 / DSM 7523 / JCM 9630 / CIP 104966 / NBRC 100827 / IM2).